Here is a 366-residue protein sequence, read N- to C-terminus: Phospho-N-acetylmuramoyl-pentapeptide-transferase (366 aa).

A run of 10 helical transmembrane segments spans residues 3–23 (QIII…PILI), 55–75 (IAII…SYFA), 80–100 (FTAS…TGFA), 118–138 (AKLI…LRFP), 161–181 (IAFG…YVVV), 197–217 (LAAG…FWQF), 238–258 (IAVL…WNAA), 262–282 (IFMG…ISVV), 290–310 (VIIG…IAVF), and 341–361 (FWLI…GDWL).

The protein belongs to the glycosyltransferase 4 family. MraY subfamily. It depends on Mg(2+) as a cofactor.

Its subcellular location is the cell membrane. It catalyses the reaction UDP-N-acetyl-alpha-D-muramoyl-L-alanyl-gamma-D-glutamyl-meso-2,6-diaminopimeloyl-D-alanyl-D-alanine + di-trans,octa-cis-undecaprenyl phosphate = di-trans,octa-cis-undecaprenyl diphospho-N-acetyl-alpha-D-muramoyl-L-alanyl-D-glutamyl-meso-2,6-diaminopimeloyl-D-alanyl-D-alanine + UMP. It participates in cell wall biogenesis; peptidoglycan biosynthesis. Its function is as follows. Catalyzes the initial step of the lipid cycle reactions in the biosynthesis of the cell wall peptidoglycan: transfers peptidoglycan precursor phospho-MurNAc-pentapeptide from UDP-MurNAc-pentapeptide onto the lipid carrier undecaprenyl phosphate, yielding undecaprenyl-pyrophosphoryl-MurNAc-pentapeptide, known as lipid I. The polypeptide is Phospho-N-acetylmuramoyl-pentapeptide-transferase (Corynebacterium efficiens (strain DSM 44549 / YS-314 / AJ 12310 / JCM 11189 / NBRC 100395)).